The following is a 304-amino-acid chain: Killer cell immunoglobulin-like receptor 2DS4 (304 aa).

The first 21 residues, 1–21 (MSLMVIIMACVGFFLLQGAWP), serve as a signal peptide directing secretion. Over 22-245 (QEGVHRKPSF…SKTGNPRHLH (224 aa)) the chain is Extracellular. 2 consecutive Ig-like C2-type domains span residues 42–107 (EETV…VPHS) and 142–205 (GENV…FRDA). Cysteines 49 and 100 form a disulfide. 5 N-linked (GlcNAc...) asparagine glycosylation sites follow: Asn67, Asn84, Asn144, Asn178, and Asn211. Cys149 and Cys198 are joined by a disulfide. Residues 220-239 (VTGNPSNSWPSPTEPSSKTG) form a disordered region. Residues 246 to 265 (VLIGTSVVKIPFTILLFFLL) form a helical membrane-spanning segment. The Cytoplasmic portion of the chain corresponds to 266–304 (HRWCSDKKNAAVMDQEPAGNRTVNSEDSDEQDHQEVSYA). Positions 280–304 (QEPAGNRTVNSEDSDEQDHQEVSYA) are disordered.

This sequence belongs to the immunoglobulin superfamily. In terms of assembly, interacts with HLA-F; this interaction is direct.

The protein localises to the cell membrane. Functionally, receptor on natural killer (NK) cells for HLA-C alleles. Does not inhibit the activity of NK cells. The protein is Killer cell immunoglobulin-like receptor 2DS4 of Homo sapiens (Human).